We begin with the raw amino-acid sequence, 472 residues long: 23S rRNA (uracil(1939)-C(5))-methyltransferase RlmD (472 aa).

Basic residues predominate over residues 1-15 (MSRTAPHRRAPKRYK). Residues 1-23 (MSRTAPHRRAPKRYKTPPPAPAH) form a disordered region. A TRAM domain is found at 23-87 (HVVTGNEPVI…PKFEQAEVVQ (65 aa)). Residues Cys100, Cys106, Cys109, and Cys188 each coordinate [4Fe-4S] cluster. Residues Gln296, Phe325, Asn330, Glu346, Asn374, and Asp395 each coordinate S-adenosyl-L-methionine. The active-site Nucleophile is Cys428.

Belongs to the class I-like SAM-binding methyltransferase superfamily. RNA M5U methyltransferase family. RlmD subfamily.

It catalyses the reaction uridine(1939) in 23S rRNA + S-adenosyl-L-methionine = 5-methyluridine(1939) in 23S rRNA + S-adenosyl-L-homocysteine + H(+). Functionally, catalyzes the formation of 5-methyl-uridine at position 1939 (m5U1939) in 23S rRNA. The chain is 23S rRNA (uracil(1939)-C(5))-methyltransferase RlmD from Paraburkholderia xenovorans (strain LB400).